The sequence spans 400 residues: Keratin, type I cytoskeletal 19 (400 aa).

The tract at residues 1-79 (MTSYSYRQSS…TASDGLLAGN (79 aa)) is head. Arg7 is subject to Omega-N-methylarginine. Residues Ser14 and Ser22 each carry the phosphoserine modification. Asymmetric dimethylarginine; alternate is present on Arg24. The residue at position 24 (Arg24) is an Omega-N-methylarginine; alternate. Omega-N-methylarginine is present on Arg32. Ser35 and Ser40 each carry phosphoserine. 2 positions are modified to omega-N-methylarginine: Arg43 and Arg51. 2 positions are modified to phosphoserine: Ser57 and Ser72. Residues 80-115 (EKLTMQNLNDRLASYLDKVRALEAANGELEVKIRDW) are coil 1A. The region spanning 80–391 (EKLTMQNLND…SLLEGQEDHY (312 aa)) is the IF rod domain. The interval 116–133 (YQKQGPGPSRDYSHYYTT) is linker 1. The segment at 134 to 225 (IQDLRDKILG…KNHEEEISTL (92 aa)) is coil 1B. A linker 12 region spans residues 226–248 (RGQVGGQVSVEVDSAPGTDLAKI). The interval 244–390 (DLAKILSDMR…RSLLEGQEDH (147 aa)) is necessary for interaction with PNN. The coil 2 stretch occupies residues 249 to 387 (LSDMRSQYEV…ATYRSLLEGQ (139 aa)). Thr323 is subject to Phosphothreonine. Positions 388 to 400 (EDHYSNLSASKVL) are rod-like helical tail. Tyr391 bears the Phosphotyrosine mark. Position 395 is a phosphoserine (Ser395).

Belongs to the intermediate filament family. In terms of assembly, heterotetramer of two type I and two type II keratins. Interacts with PNN and the actin-binding domain of DMD.

Involved in the organization of myofibers. Together with KRT8, helps to link the contractile apparatus to dystrophin at the costameres of striated muscle. This Pongo abelii (Sumatran orangutan) protein is Keratin, type I cytoskeletal 19.